We begin with the raw amino-acid sequence, 286 residues long: Protease HtpX homolog (286 aa).

A run of 2 helical transmembrane segments spans residues 7 to 27 and 29 to 49; these read TFMLMAAITALFIVIGGMIGG and SGMMLALLFALGMNFFSYWFS. His-131 contributes to the Zn(2+) binding site. Glu-132 is a catalytic residue. His-135 is a Zn(2+) binding site. 2 helical membrane-spanning segments follow: residues 146-166 and 177-197; these read LSATMAGAISALANFAVFFGG and IAGIAVAILAPLAASLIQMAI. Zn(2+) is bound at residue Glu-202.

This sequence belongs to the peptidase M48B family. Zn(2+) is required as a cofactor.

The protein resides in the cell inner membrane. This is Protease HtpX homolog from Ralstonia nicotianae (strain ATCC BAA-1114 / GMI1000) (Ralstonia solanacearum).